The sequence spans 325 residues: Succinylglutamate desuccinylase (325 aa).

H51, E54, and H148 together coordinate Zn(2+). Residue E211 is part of the active site.

It belongs to the AspA/AstE family. Succinylglutamate desuccinylase subfamily. Zn(2+) serves as cofactor.

The catalysed reaction is N-succinyl-L-glutamate + H2O = L-glutamate + succinate. It functions in the pathway amino-acid degradation; L-arginine degradation via AST pathway; L-glutamate and succinate from L-arginine: step 5/5. Functionally, transforms N(2)-succinylglutamate into succinate and glutamate. This chain is Succinylglutamate desuccinylase, found in Photorhabdus laumondii subsp. laumondii (strain DSM 15139 / CIP 105565 / TT01) (Photorhabdus luminescens subsp. laumondii).